The sequence spans 408 residues: MTFLQRLQGLADNKICAFAWFVVRRFDEERVPQAAASMTFTTLLALVPVLTVMVAVASIFPVFDRWSDSFVSFVNQTIVPQGADMVFDYINAFREQANRLTAIGSVMLVVTSLMLIRTIDNTFNRIWRVNSQRPWMMQFLVYWALLTFGPLSLGVGISFMVGSVQDAALASGAPQWSGALRTAATLTFMTLLLWGLYRFVPNRFVPARQAFVGALATAFCLETARSLFTWYMGNFDGYRSIYGAFAAVPFFLLWLNLLWTLVLGGAVLTSSLSYWRGEAFRRGFDSRGRFDDVLKILLLLDAAQKEGKALPVQEFRRHINMGYDELGELLEKLARHGYIYSGRQGWVLKTGADSIELNELFKLFVYRPLPVERDHVNQAVDAVMTPCLQTLNMTLAEFDAQAKKQQQS.

6 helical membrane-spanning segments follow: residues 43-63 (LLAL…FPVF), 100-120 (LTAI…RTID), 139-159 (FLVY…GISF), 176-196 (WSGA…LWGL), 210-230 (AFVG…LFTW), and 248-268 (VPFF…GAVL).

The protein belongs to the UPF0761 family.

The protein localises to the cell inner membrane. This chain is UPF0761 membrane protein NMC0462, found in Neisseria meningitidis serogroup C / serotype 2a (strain ATCC 700532 / DSM 15464 / FAM18).